The primary structure comprises 448 residues: MANPLPVSEVVRYVKRQLDDDVLLRQVAVIGEISNFKRYSSGHCYFTLKDDASRMKAVMFSRDAKQLQFEPKDGMKVIAVSKVTMYEATGDVQLYVELMRQDGIGLLFERYEARKRELEEMGWFDDERKKPLPMFPERVGIVTSPKGAALHDIATTLRRRAPHVAITFAPVAVQGEMAAPQVASAIRWMNERTDCDVLIVGRGGGSIEELWAFNEDVVVEAIYASTIPIISAVGHETDFTLSDFVADVRAATPTAAAELATAMIDAQRKDVERLDNHLHKAVRSQLDESRSRVERMINSYGLKSPRYTISQKRERFAQSEIRLEQGMRRHLTQATHQLRQLSQQLDVKRFSKTLSKQGDEVNHMVERLRRTRPLEQATLQFAQQVGRLHAVSPLAVLSRGYTFIEQDGAYVQNVKQLRDGDVSIRFRDGHAIAEVKERIVGDEERTDI.

The protein belongs to the XseA family. Heterooligomer composed of large and small subunits.

The protein localises to the cytoplasm. It catalyses the reaction Exonucleolytic cleavage in either 5'- to 3'- or 3'- to 5'-direction to yield nucleoside 5'-phosphates.. In terms of biological role, bidirectionally degrades single-stranded DNA into large acid-insoluble oligonucleotides, which are then degraded further into small acid-soluble oligonucleotides. This chain is Exodeoxyribonuclease 7 large subunit, found in Exiguobacterium sp. (strain ATCC BAA-1283 / AT1b).